We begin with the raw amino-acid sequence, 407 residues long: Aminomethyltransferase, mitochondrial (407 aa).

The N-terminal 29 residues, 1 to 29 (MRGGLWQLGQSITRRLGQSDKKTIARRCY), are a transit peptide targeting the mitochondrion. The substrate site is built by glutamate 234, arginine 265, and tyrosine 403.

It belongs to the GcvT family. In terms of assembly, the glycine cleavage system is composed of four proteins: P, T, L and H.

It localises to the mitochondrion. It catalyses the reaction N(6)-[(R)-S(8)-aminomethyldihydrolipoyl]-L-lysyl-[protein] + (6S)-5,6,7,8-tetrahydrofolate = N(6)-[(R)-dihydrolipoyl]-L-lysyl-[protein] + (6R)-5,10-methylene-5,6,7,8-tetrahydrofolate + NH4(+). Functionally, the glycine cleavage system catalyzes the degradation of glycine. The chain is Aminomethyltransferase, mitochondrial (GDCST) from Flaveria pringlei.